A 291-amino-acid chain; its full sequence is Beta-lactamase CTX-M-1 (291 aa).

The N-terminal stretch at 1 to 28 is a signal peptide; that stretch reads MVKKSLRQFTLMATATVTLLLGSVPLYA. Ser-73 acts as the Nucleophile; acyl-ester intermediate in catalysis. Residues Lys-76, Ser-133, Glu-169, and Ser-240 each contribute to the a beta-lactam site. Glu-169 (proton acceptor) is an active-site residue.

This sequence belongs to the class-A beta-lactamase family. Monomer.

It localises to the secreted. The catalysed reaction is a beta-lactam + H2O = a substituted beta-amino acid. Its activity is regulated as follows. Inhibited by the beta-lactamase-blocking agent clavulanic acid; in the TG1 strain. Extended-spectrum beta-lactamase (ESBL) which confers resistance to penicillins, as well as first, second and third-generation cephalosporins. Has cefotaxime-hydrolyzing activity. Inactive against the cephamycin antibiotic, cefoxitin, or against the carbapenem, imipenem. In Escherichia coli, this protein is Beta-lactamase CTX-M-1.